Reading from the N-terminus, the 301-residue chain is Acetylglutamate kinase (301 aa).

Residues 72–73, Arg94, and Asn199 each bind substrate; that span reads GG.

It belongs to the acetylglutamate kinase family. ArgB subfamily.

Its subcellular location is the cytoplasm. The enzyme catalyses N-acetyl-L-glutamate + ATP = N-acetyl-L-glutamyl 5-phosphate + ADP. Its pathway is amino-acid biosynthesis; L-arginine biosynthesis; N(2)-acetyl-L-ornithine from L-glutamate: step 2/4. In terms of biological role, catalyzes the ATP-dependent phosphorylation of N-acetyl-L-glutamate. In Bartonella quintana (strain Toulouse) (Rochalimaea quintana), this protein is Acetylglutamate kinase.